Consider the following 556-residue polypeptide: Valencene synthase (556 aa).

The span at 1–12 shows a compositional bias: polar residues; that stretch reads MSTQVSASSLAQ. The tract at residues 1–24 is disordered; sequence MSTQVSASSLAQIPQPKNRPVANF. Residues Asp-310, Asp-314, and Glu-462 each coordinate Mg(2+). A DDXXD motif motif is present at residues 310–314; that stretch reads DDIHD.

It belongs to the terpene synthase family. Tpsa subfamily. Mg(2+) is required as a cofactor. As to expression, expressed in flowers and anthers. Detected inside the pollen grains, but not in stems, leaves, tendrils, roots, seeds, pistils or caps.

The protein resides in the cytoplasm. The enzyme catalyses (2E,6E)-farnesyl diphosphate = (+)-valencene + diphosphate. It carries out the reaction (2E,6E)-farnesyl diphosphate = (-)-7-epi-alpha-selinene + diphosphate. Its pathway is secondary metabolite biosynthesis; terpenoid biosynthesis. Its function is as follows. Involved in the biosynthesis of valencene, a major volatile emitted from flowers of grapevine. Can use farnesyl diphosphate as substrate, but not geranyl diphosphate or geranylgeranyl diphosphate. Produces mainly (+)-valencene and (-)-7-epi-alpha-selinene along with five minor products. This Vitis vinifera (Grape) protein is Valencene synthase (ValCS).